The chain runs to 199 residues: Photosystem I reaction center subunit XI (199 aa).

A run of 2 helical transmembrane segments spans residues 108-128 (LTAG…LLVL) and 165-185 (FWLG…TLHL).

This sequence belongs to the PsaL family.

It localises to the cellular thylakoid membrane. This is Photosystem I reaction center subunit XI from Prochlorococcus marinus (strain AS9601).